The primary structure comprises 314 residues: Malate dehydrogenase (314 aa).

9–15 (IGVGNVG) contacts NAD(+). Residues Arg84 and Arg90 each contribute to the substrate site. NAD(+) is bound by residues Asn97 and 120–122 (ISN). Substrate contacts are provided by Asn122 and Arg153. Residue His177 is the Proton acceptor of the active site.

The protein belongs to the LDH/MDH superfamily.

It catalyses the reaction (S)-malate + NAD(+) = oxaloacetate + NADH + H(+). In terms of biological role, catalyzes the reversible oxidation of malate to oxaloacetate. The polypeptide is Malate dehydrogenase (Aliarcobacter butzleri (strain RM4018) (Arcobacter butzleri)).